Here is a 354-residue protein sequence, read N- to C-terminus: MEHFDVAIIGLGPAGSALARKLAGKMQVIALDKKHQHGTEGFSKPCGGLLAPDAQRSFIRDGLTLPVDVIANPQIFSVKTVDVAASLTRNYQRSYININRHAFDLWMKSLIPASVEVYHDSLCRKIWREDDKWHVIFRADGWEQHITARYLVGADGANSMVRRHLYPDHQIRKYVAIQQWFAEKHPVPFYSCIFDNAITDCYSWSISKDGYFIFGGAYPMKDGQTRFTTLKEKMSAFQFQFGKAVKSEKCTVLFPSRWQDFVCGKDNAFLIGEAAGFISASSLEGISYALDSADILRSVLLKQPEKLNTAYWRATRKLRLKLFGKIVKSRCLTAPALRKWIMRSGVAHIPQLKD.

This sequence belongs to the CbrA family.

The sequence is that of Protein CbrA (cbrA) from Shigella sonnei (strain Ss046).